Reading from the N-terminus, the 476-residue chain is Stromelysin-2 (476 aa).

An N-terminal signal peptide occupies residues 1–17 (MEPLAILALLSLPICSA). The propeptide at 18-99 (YPLHGAVTQG…PRCGVPDVGG (82 aa)) is activation peptide. Residues 90-97 (PRCGVPDV) carry the Cysteine switch motif. Positions 92, 168, 170, 183, 196, and 218 each coordinate Zn(2+). The active site involves glutamate 219. Residues histidine 222 and histidine 228 each contribute to the Zn(2+) site. 4 Hemopexin repeats span residues 286 to 335 (PDKC…WPTL), 336 to 382 (PSDL…GFPP), 384 to 432 (VKKI…FPGI), and 433 to 476 (EPQV…WLLC). Cysteines 289 and 476 form a disulfide.

This sequence belongs to the peptidase M10A family. Requires Zn(2+) as cofactor. It depends on Ca(2+) as a cofactor. In terms of tissue distribution, expressed in small intestine. Weak levels in heart and lung.

Its subcellular location is the secreted. It localises to the extracellular space. The protein localises to the extracellular matrix. It catalyses the reaction Similar to stromelysin 1, but action on collagen types III, IV and V is weak.. Functionally, can degrade fibronectin, gelatins of type I, III, IV, and V; weakly collagens III, IV, and V. Activates procollagenase. In Mus musculus (Mouse), this protein is Stromelysin-2 (Mmp10).